The chain runs to 447 residues: 3-phosphoshikimate 1-carboxyvinyltransferase (447 aa).

Positions 36, 37, and 41 each coordinate 3-phosphoshikimate. Lys36 contacts phosphoenolpyruvate. Residues Gly109 and Arg138 each coordinate phosphoenolpyruvate. 3-phosphoshikimate-binding residues include Ser183, Gln185, Asp333, and Lys360. Gln185 lines the phosphoenolpyruvate pocket. Asp333 functions as the Proton acceptor in the catalytic mechanism. Residues Arg364 and Arg406 each contribute to the phosphoenolpyruvate site.

It belongs to the EPSP synthase family. As to quaternary structure, monomer.

The protein resides in the cytoplasm. It carries out the reaction 3-phosphoshikimate + phosphoenolpyruvate = 5-O-(1-carboxyvinyl)-3-phosphoshikimate + phosphate. The protein operates within metabolic intermediate biosynthesis; chorismate biosynthesis; chorismate from D-erythrose 4-phosphate and phosphoenolpyruvate: step 6/7. In terms of biological role, catalyzes the transfer of the enolpyruvyl moiety of phosphoenolpyruvate (PEP) to the 5-hydroxyl of shikimate-3-phosphate (S3P) to produce enolpyruvyl shikimate-3-phosphate and inorganic phosphate. This chain is 3-phosphoshikimate 1-carboxyvinyltransferase, found in Synechocystis sp. (strain ATCC 27184 / PCC 6803 / Kazusa).